Reading from the N-terminus, the 650-residue chain is Acetyl-coenzyme A synthetase (650 aa).

CoA is bound by residues 190–193 (RGGR), Thr308, and Asn332. ATP-binding positions include 384–386 (GEP), 408–413 (DTWWQT), Asp497, and Arg512. Ser520 contacts CoA. Arg523 provides a ligand contact to ATP. Val534, His536, and Val539 together coordinate Mg(2+). Position 581 (Arg581) interacts with CoA. Lys606 is modified (N6-acetyllysine).

This sequence belongs to the ATP-dependent AMP-binding enzyme family. Mg(2+) is required as a cofactor. Post-translationally, acetylated. Deacetylation by the SIR2-homolog deacetylase activates the enzyme.

It carries out the reaction acetate + ATP + CoA = acetyl-CoA + AMP + diphosphate. Functionally, catalyzes the conversion of acetate into acetyl-CoA (AcCoA), an essential intermediate at the junction of anabolic and catabolic pathways. AcsA undergoes a two-step reaction. In the first half reaction, AcsA combines acetate with ATP to form acetyl-adenylate (AcAMP) intermediate. In the second half reaction, it can then transfer the acetyl group from AcAMP to the sulfhydryl group of CoA, forming the product AcCoA. This Bradyrhizobium sp. (strain ORS 278) protein is Acetyl-coenzyme A synthetase.